We begin with the raw amino-acid sequence, 97 residues long: MAGASDRTGVRRPRKAKKDPNAPKRALSSYMFFAKEKRVEIIAENPEIAKDVAAIGKMIGAAWNALSDEEKKPYERMSDEDRVRYEREKAEYAQRKV.

The disordered stretch occupies residues 1–24 (MAGASDRTGVRRPRKAKKDPNAPK). A DNA-binding region (HMG box) is located at residues 23–93 (PKRALSSYMF…RYEREKAEYA (71 aa)).

It is found in the nucleus. In Babesia bovis, this protein is High mobility group protein homolog NHP1.